The following is a 343-amino-acid chain: Cyclic AMP-AMP-AMP synthase (343 aa).

Belongs to the CD-NTase family. D01 subfamily. It depends on Mg(2+) as a cofactor.

It catalyses the reaction 3 ATP = 2',3',3'-c-tri-AMP + 3 diphosphate. Functionally, cyclic nucleotide synthase (second messenger synthase) of a CBASS antivirus system. CBASS (cyclic oligonucleotide-based antiphage signaling system) provides immunity against bacteriophage. The CD-NTase protein synthesizes cyclic nucleotides in response to infection; these serve as specific second messenger signals. The signals activate a diverse range of effectors, leading to bacterial cell death and thus abortive phage infection. A type II-C(AAAA) CBASS system. In terms of biological role, cyclic trinucleotide synthase that catalyzes the synthesis of 2',3',3'-cyclic AMP-AMP-AMP (2',3',3'-c-tri-AMP or 2'3'3'-cAAA) as the major product, as well as another cyclic AMP(4) 2'-5'-linked minor product that acts as a second messenger for cell signal transduction. The sequence is that of Cyclic AMP-AMP-AMP synthase from Acinetobacter sp. (strain ATCC 27244 / 9458).